The following is a 572-amino-acid chain: Putative acyl-CoA synthetase CCNA_01223 (572 aa).

This sequence belongs to the ATP-dependent AMP-binding enzyme family.

Its pathway is lipid metabolism; sphingolipid metabolism. Functionally, involved in de novo bacterial ceramide synthesis. This chain is Putative acyl-CoA synthetase CCNA_01223, found in Caulobacter vibrioides (strain NA1000 / CB15N) (Caulobacter crescentus).